The sequence spans 571 residues: Proline--tRNA ligase (571 aa).

Belongs to the class-II aminoacyl-tRNA synthetase family. ProS type 1 subfamily. In terms of assembly, homodimer.

The protein localises to the cytoplasm. It catalyses the reaction tRNA(Pro) + L-proline + ATP = L-prolyl-tRNA(Pro) + AMP + diphosphate. Its function is as follows. Catalyzes the attachment of proline to tRNA(Pro) in a two-step reaction: proline is first activated by ATP to form Pro-AMP and then transferred to the acceptor end of tRNA(Pro). As ProRS can inadvertently accommodate and process non-cognate amino acids such as alanine and cysteine, to avoid such errors it has two additional distinct editing activities against alanine. One activity is designated as 'pretransfer' editing and involves the tRNA(Pro)-independent hydrolysis of activated Ala-AMP. The other activity is designated 'posttransfer' editing and involves deacylation of mischarged Ala-tRNA(Pro). The misacylated Cys-tRNA(Pro) is not edited by ProRS. The polypeptide is Proline--tRNA ligase (Pseudomonas aeruginosa (strain LESB58)).